The chain runs to 135 residues: Large ribosomal subunit protein uL16c (135 aa).

The protein belongs to the universal ribosomal protein uL16 family. Part of the 50S ribosomal subunit.

Its subcellular location is the plastid. The sequence is that of Large ribosomal subunit protein uL16c from Epifagus virginiana (Beechdrops).